Reading from the N-terminus, the 115-residue chain is Ribonuclease P protein component (115 aa).

This sequence belongs to the RnpA family. Consists of a catalytic RNA component (M1 or rnpB) and a protein subunit.

The catalysed reaction is Endonucleolytic cleavage of RNA, removing 5'-extranucleotides from tRNA precursor.. Its function is as follows. RNaseP catalyzes the removal of the 5'-leader sequence from pre-tRNA to produce the mature 5'-terminus. It can also cleave other RNA substrates such as 4.5S RNA. The protein component plays an auxiliary but essential role in vivo by binding to the 5'-leader sequence and broadening the substrate specificity of the ribozyme. The chain is Ribonuclease P protein component from Symbiobacterium thermophilum (strain DSM 24528 / JCM 14929 / IAM 14863 / T).